Here is a 165-residue protein sequence, read N- to C-terminus: Shikimate kinase (165 aa).

11 to 16 contributes to the ATP binding site; sequence GAGKTT. T15 serves as a coordination point for Mg(2+). The substrate site is built by D33, R57, and G78. R116 is an ATP binding site. Position 134 (R134) interacts with substrate.

Belongs to the shikimate kinase family. Monomer. The cofactor is Mg(2+).

The protein localises to the cytoplasm. The catalysed reaction is shikimate + ATP = 3-phosphoshikimate + ADP + H(+). It functions in the pathway metabolic intermediate biosynthesis; chorismate biosynthesis; chorismate from D-erythrose 4-phosphate and phosphoenolpyruvate: step 5/7. In terms of biological role, catalyzes the specific phosphorylation of the 3-hydroxyl group of shikimic acid using ATP as a cosubstrate. In Bacillus mycoides (strain KBAB4) (Bacillus weihenstephanensis), this protein is Shikimate kinase.